The chain runs to 439 residues: 3beta-hydroxysteroid-dehydrogenase/decarboxylase isoform 1 (439 aa).

16 to 21 (GGRGFA) provides a ligand contact to NAD(+). 2 N-linked (GlcNAc...) asparagine glycosylation sites follow: Asn75 and Asn158. Residues Tyr161 and Lys165 each contribute to the NAD(+) site. The active-site Proton donor is Lys165. Asn327 carries an N-linked (GlcNAc...) asparagine glycan. The Reticulon; atypical domain maps to 371–439 (VTETIQWKKQ…MKVFGSKKID (69 aa)). Helical transmembrane passes span 381-401 (TLIA…TTGS) and 405-425 (IITA…INGI).

It belongs to the 3-beta-HSD family.

It is found in the endoplasmic reticulum membrane. It catalyses the reaction a 3beta-hydroxysteroid-4alpha-carboxylate + NAD(+) = a 3-oxosteroid + CO2 + NADH. The enzyme catalyses 4alpha-carboxy-4beta,14alpha-dimethyl-9beta,19-cyclo-5alpha-ergost-24(24(1))-en-3beta-ol + NAD(+) = cycloeucalenone + CO2 + NADH. Its pathway is steroid biosynthesis; zymosterol biosynthesis; zymosterol from lanosterol: step 4/6. Functionally, 3beta-hydroxysteroid-dehydrogenase/decarboxylase involved in sterol synthesis. Catalyzes the formation of 3-oxosteroids from 3beta-hydroxysteroids-4alpha-carboxylate. Involved in the regulation of inflorescence internodes and leaves growth, probably by affecting auxin transporter activity possibly by altering sterol composition in the membranes. In Arabidopsis thaliana (Mouse-ear cress), this protein is 3beta-hydroxysteroid-dehydrogenase/decarboxylase isoform 1.